We begin with the raw amino-acid sequence, 264 residues long: ATP synthase subunit a (264 aa).

6 consecutive transmembrane segments (helical) span residues V27–S47, V87–I107, D131–I151, L172–L192, L196–A216, and L230–L250.

Belongs to the ATPase A chain family. As to quaternary structure, F-type ATPases have 2 components, CF(1) - the catalytic core - and CF(0) - the membrane proton channel. CF(1) has five subunits: alpha(3), beta(3), gamma(1), delta(1), epsilon(1). CF(0) has three main subunits: a(1), b(2) and c(9-12). The alpha and beta chains form an alternating ring which encloses part of the gamma chain. CF(1) is attached to CF(0) by a central stalk formed by the gamma and epsilon chains, while a peripheral stalk is formed by the delta and b chains.

The protein localises to the cell inner membrane. Functionally, key component of the proton channel; it plays a direct role in the translocation of protons across the membrane. The sequence is that of ATP synthase subunit a from Pasteurella multocida (strain Pm70).